The chain runs to 283 residues: Thymidylate synthase (283 aa).

Residue Arg-21 participates in dUMP binding. His-51 contacts (6R)-5,10-methylene-5,6,7,8-tetrahydrofolate. 123–124 contacts dUMP; sequence RR. The active-site Nucleophile is the Cys-156. DUMP-binding positions include 185-188, Asn-196, and 226-228; these read RSAD and HIY. Asp-188 is a binding site for (6R)-5,10-methylene-5,6,7,8-tetrahydrofolate. Ala-282 contacts (6R)-5,10-methylene-5,6,7,8-tetrahydrofolate.

This sequence belongs to the thymidylate synthase family. Bacterial-type ThyA subfamily. In terms of assembly, homodimer.

Its subcellular location is the cytoplasm. It carries out the reaction dUMP + (6R)-5,10-methylene-5,6,7,8-tetrahydrofolate = 7,8-dihydrofolate + dTMP. The protein operates within pyrimidine metabolism; dTTP biosynthesis. Its function is as follows. Catalyzes the reductive methylation of 2'-deoxyuridine-5'-monophosphate (dUMP) to 2'-deoxythymidine-5'-monophosphate (dTMP) while utilizing 5,10-methylenetetrahydrofolate (mTHF) as the methyl donor and reductant in the reaction, yielding dihydrofolate (DHF) as a by-product. This enzymatic reaction provides an intracellular de novo source of dTMP, an essential precursor for DNA biosynthesis. In Flavobacterium johnsoniae (strain ATCC 17061 / DSM 2064 / JCM 8514 / BCRC 14874 / CCUG 350202 / NBRC 14942 / NCIMB 11054 / UW101) (Cytophaga johnsonae), this protein is Thymidylate synthase.